A 467-amino-acid chain; its full sequence is Retinoic acid receptor RXR-alpha (467 aa).

The interval 1-112 (MDTKHFLPLD…MNPVSSTEDI (112 aa)) is disordered. Positions 1–139 (MDTKHFLPLD…GNMASFTKHI (139 aa)) are modulating domain. A Glycyl lysine isopeptide (Lys-Gly) (interchain with G-Cter in SUMO2) cross-link involves residue K4. Positions 11-25 (FSTQVNSSSLNSPTG) are enriched in polar residues. 2 positions are modified to phosphoserine: S22 and S28. The segment covering 32–52 (PSLHPSLGPGIGSPLGSPGQL) has biased composition (low complexity). Positions 54–63 (SPISTLSSPI) are enriched in polar residues. Residues S61 and S75 each carry the phosphoserine; by MAPK8 and MAPK9 modification. The span at 83-109 (SVPTTPTLGFGTGSPQLNSPMNPVSST) shows a compositional bias: polar residues. T87 is modified (phosphothreonine; by MAPK8 and MAPK9). Residue K113 forms a Glycyl lysine isopeptide (Lys-Gly) (interchain with G-Cter in SUMO) linkage. S134 bears the Phosphoserine mark. Residues C140 and C143 each coordinate Zn(2+). The NR C4-type zinc-finger motif lies at 140-160 (CAICGDRSSGKHYGVYSCEGC). The nuclear receptor DNA-binding region spans 140-205 (CAICGDRSSG…RYQKCLAMGM (66 aa)). At K150 the chain carries N6-acetyllysine. C157 and C160 together coordinate Zn(2+). A nuclear localization signal region spans residues 165-170 (KRTVRK). 4 residues coordinate Zn(2+): C176, C182, C192, and C195. Residues 176–200 (CRDNKDCLIDKRQRNRCQYCRYQKC) form an NR C4-type zinc finger. The segment at 206-229 (KREAVQEERQRGKDRNENEVESTS) is hinge. Residues 211–223 (QEERQRGKDRNEN) show a composition bias toward basic and acidic residues. The segment at 211–233 (QEERQRGKDRNENEVESTSSANE) is disordered. The 232-residue stretch at 232–463 (NEDMPVEKIL…TFLMEMLEAP (232 aa)) folds into the NR LBD domain. S264 bears the Phosphoserine mark. S265 carries the phosphoserine; by MAPK8 and MAPK9 modification. Positions 321 and 332 each coordinate 9-cis-retinoate. Positions 321 and 332 each coordinate all-trans-retinoate. A required for nuclear export region spans residues 353–373 (RVLTELVSKMRDMQMDKTELG).

This sequence belongs to the nuclear hormone receptor family. NR2 subfamily. Homodimer. Heterodimer with RARA; required for ligand-dependent retinoic acid receptor transcriptional activity. Heterodimer with PPARA (via the leucine-like zipper in the LBD); the interaction is required for PPARA transcriptional activity. Heterodimerizes with PPARG. Heterodimerizes (via NR LBD) with RARB. Heterodimerizes with NR1H4; the heterodimerization enhances the binding affinity for LXXLL motifs from coactivators. Interacts with coactivator NCO6. Interacts with coactivator NCO3. Interacts with coactivator FAM120B. Interacts with coactivator PELP1, SENP6, SFPQ, DNTTIP2 and RNF8. Interacts with PRMT2. Interacts with ASXL1. Interacts with BHLHE40/DEC1, BHLHE41/DEC2, NCOR1 and NCOR2. Interacts in a ligand-dependent fashion with MED1 and NCOA1. Interacts with VDR. Interacts with EP300; the interaction is decreased by 9-cis retinoic acid. Heterodimer (via C-terminus) with NR4A1 (via DNA-binding domain); the interaction is enhanced by 9-cis retinoic acid. NR4A1 competes with EP300 for interaction with RXRA and thereby attenuates EP300 mediated acetylation of RXRA. In the absence of hormonal ligand, interacts with TACC1. Interacts ith IGFBP3. Acetylated by EP300; acetylation enhances DNA binding and transcriptional activity. Post-translationally, phosphorylated on serine and threonine residues mainly in the N-terminal modulating domain. Constitutively phosphorylated on Ser-22 in the presence or absence of ligand. Under stress conditions, hyperphosphorylated by activated JNK on Ser-61, Ser-75, Thr-87 and Ser-265. Phosphorylated on Ser-28, in vitro, by PKA. This phosphorylation is required for repression of cAMP-mediated transcriptional activity of RARA. In terms of processing, ubiquitinated by UBR5, leading to its degradation: UBR5 specifically recognizes and binds ligand-bound RXRA when it is not associated with coactivators (NCOAs). In presence of NCOAs, the UBR5-degron is not accessible, preventing its ubiquitination and degradation. Sumoylation negatively regulates transcriptional activity. Desumoylated specifically by SENP6. Expressed in macrophages (at protein level).

It is found in the nucleus. It localises to the cytoplasm. The protein resides in the mitochondrion. Functionally, receptor for retinoic acid that acts as a transcription factor. Forms homo- or heterodimers with retinoic acid receptors (RARs) and binds to target response elements in response to their ligands, all-trans or 9-cis retinoic acid, to regulate gene expression in various biological processes. The RAR/RXR heterodimers bind to the retinoic acid response elements (RARE) composed of tandem 5'-AGGTCA-3' sites known as DR1-DR5 to regulate transcription. The high affinity ligand for retinoid X receptors (RXRs) is 9-cis retinoic acid. In the absence of ligand, the RXR-RAR heterodimers associate with a multiprotein complex containing transcription corepressors that induce histone deacetylation, chromatin condensation and transcriptional suppression. On ligand binding, the corepressors dissociate from the receptors and coactivators are recruited leading to transcriptional activation. Serves as a common heterodimeric partner for a number of nuclear receptors, such as RARA, RARB and PPARA. The RXRA/RARB heterodimer can act as a transcriptional repressor or transcriptional activator, depending on the RARE DNA element context. The RXRA/PPARA heterodimer is required for PPARA transcriptional activity on fatty acid oxidation genes such as ACOX1 and the P450 system genes. Together with RARA, positively regulates microRNA-10a expression, thereby inhibiting the GATA6/VCAM1 signaling response to pulsatile shear stress in vascular endothelial cells. Acts as an enhancer of RARA binding to RARE DNA element. May facilitate the nuclear import of heterodimerization partners such as VDR and NR4A1. Promotes myelin debris phagocytosis and remyelination by macrophages. Plays a role in the attenuation of the innate immune system in response to viral infections, possibly by negatively regulating the transcription of antiviral genes such as type I IFN genes. Involved in the regulation of calcium signaling by repressing ITPR2 gene expression, thereby controlling cellular senescence. This chain is Retinoic acid receptor RXR-alpha (Rxra), found in Mus musculus (Mouse).